We begin with the raw amino-acid sequence, 133 residues long: Large ribosomal subunit protein bL12 (133 aa).

The interval 98 to 118 (DMVESTPKPIKEGTGKEDAED) is disordered.

This sequence belongs to the bacterial ribosomal protein bL12 family. As to quaternary structure, homodimer. Part of the ribosomal stalk of the 50S ribosomal subunit. Forms a multimeric L10(L12)X complex, where L10 forms an elongated spine to which 2 to 4 L12 dimers bind in a sequential fashion. Binds GTP-bound translation factors.

Its function is as follows. Forms part of the ribosomal stalk which helps the ribosome interact with GTP-bound translation factors. Is thus essential for accurate translation. In Crocosphaera subtropica (strain ATCC 51142 / BH68) (Cyanothece sp. (strain ATCC 51142)), this protein is Large ribosomal subunit protein bL12.